We begin with the raw amino-acid sequence, 238 residues long: Opacity protein opA60 (238 aa).

A signal peptide is located at residue alanine 1.

It belongs to the opacity porin family.

The protein localises to the cell outer membrane. Implicated in a number of adherence functions. OPA proteins are implicated in pathogenesis and are subject to phase variation. The protein is Opacity protein opA60 (opaH) of Neisseria gonorrhoeae.